Consider the following 427-residue polypeptide: Transcobalamin-2 (427 aa).

Residues 1–18 (MRHLGAFLFLLGVLGALT) form the signal peptide. Intrachain disulfides connect cysteine 21–cysteine 267, cysteine 83–cysteine 96, cysteine 116–cysteine 309, and cysteine 165–cysteine 205. Residues glutamine 104, 152–156 (TSYYQ), histidine 190, 190–194 (HHSVD), asparagine 242, serine 245, glutamine 291, and 395–397 (WQL) each bind cob(II)alamin.

Belongs to the eukaryotic cobalamin transport proteins family. Interacts with CD320 (via LDL-receptor class A domains).

The protein resides in the secreted. Functionally, primary vitamin B12-binding and transport protein. Delivers cobalamin to cells. This chain is Transcobalamin-2 (TCN2), found in Homo sapiens (Human).